Consider the following 661-residue polypeptide: Meiotic coiled-coil protein 1 (661 aa).

Coiled-coil stretches lie at residues 38-78 (LDAL…IIEE), 100-121 (RAIY…ERLS), 143-184 (DIKL…LSIK), 304-320 (ELIQ…EVDL), and 360-387 (LKRL…DNEK). Disordered regions lie at residues 410 to 446 (QNQE…LRNI), 467 to 562 (LIDR…TPAS), and 573 to 592 (LSRT…TPTQ). Positions 414-430 (NISSNDNSKSSPESSPP) are enriched in low complexity. The span at 436–445 (GKIENKKLRN) shows a compositional bias: basic and acidic residues. Composition is skewed to polar residues over residues 472–481 (VNQSPDTRSV), 548–562 (HNSV…TPAS), and 582–592 (FTNSLDDTPTQ).

The sequence is that of Meiotic coiled-coil protein 1 (mcp1) from Schizosaccharomyces pombe (strain 972 / ATCC 24843) (Fission yeast).